The following is a 732-amino-acid chain: Alpha-galactosidase Mel36A (732 aa).

Residues 370–371 (DD), Trp415, Arg447, 480–484 (KWDMN), 530–533 (CSGG), and Asp552 contribute to the substrate site. Catalysis depends on Asp482, which acts as the Nucleophile. Asp552 (proton donor) is an active-site residue.

It belongs to the glycosyl hydrolase 36 family. In terms of assembly, homotetramer.

The enzyme catalyses Hydrolysis of terminal, non-reducing alpha-D-galactose residues in alpha-D-galactosides, including galactose oligosaccharides, galactomannans and galactolipids.. Hydrolyzes the short-chain alpha-galactosaccharide raffinose. This is Alpha-galactosidase Mel36A from Lactobacillus acidophilus (strain ATCC 700396 / NCK56 / N2 / NCFM).